A 501-amino-acid polypeptide reads, in one-letter code: Glycerol kinase (501 aa).

Thr-17 contacts ADP. Thr-17, Thr-18, and Ser-19 together coordinate ATP. Residue Thr-17 participates in sn-glycerol 3-phosphate binding. Position 21 (Arg-21) interacts with ADP. Positions 87, 88, 139, and 243 each coordinate sn-glycerol 3-phosphate. Residues Arg-87, Glu-88, Tyr-139, Asp-243, and Gln-244 each coordinate glycerol. Positions 265 and 308 each coordinate ADP. ATP contacts are provided by Thr-265, Gly-308, Gln-312, and Gly-409. Positions 409 and 413 each coordinate ADP.

It belongs to the FGGY kinase family.

It catalyses the reaction glycerol + ATP = sn-glycerol 3-phosphate + ADP + H(+). The protein operates within polyol metabolism; glycerol degradation via glycerol kinase pathway; sn-glycerol 3-phosphate from glycerol: step 1/1. Its activity is regulated as follows. Inhibited by fructose 1,6-bisphosphate (FBP). Its function is as follows. Key enzyme in the regulation of glycerol uptake and metabolism. Catalyzes the phosphorylation of glycerol to yield sn-glycerol 3-phosphate. This is Glycerol kinase from Pseudomonas fluorescens (strain ATCC BAA-477 / NRRL B-23932 / Pf-5).